A 141-amino-acid chain; its full sequence is Putative pre-16S rRNA nuclease (141 aa).

This sequence belongs to the YqgF nuclease family.

The protein resides in the cytoplasm. Functionally, could be a nuclease involved in processing of the 5'-end of pre-16S rRNA. In Coxiella burnetii (strain CbuK_Q154) (Coxiella burnetii (strain Q154)), this protein is Putative pre-16S rRNA nuclease.